Here is a 278-residue protein sequence, read N- to C-terminus: NH(3)-dependent NAD(+) synthetase (278 aa).

Residue 39-46 (GVSGGVDS) coordinates ATP. Asp45 is a Mg(2+) binding site. Arg121 serves as a coordination point for deamido-NAD(+). ATP is bound at residue Thr141. Position 146 (Glu146) interacts with Mg(2+). The deamido-NAD(+) site is built by Lys154 and Asp161. Residues Lys170 and Ser192 each coordinate ATP. 252-253 (HK) is a deamido-NAD(+) binding site.

It belongs to the NAD synthetase family. As to quaternary structure, homodimer.

The catalysed reaction is deamido-NAD(+) + NH4(+) + ATP = AMP + diphosphate + NAD(+) + H(+). It participates in cofactor biosynthesis; NAD(+) biosynthesis; NAD(+) from deamido-NAD(+) (ammonia route): step 1/1. In terms of biological role, catalyzes the ATP-dependent amidation of deamido-NAD to form NAD. Uses ammonia as a nitrogen source. The protein is NH(3)-dependent NAD(+) synthetase of Saccharolobus solfataricus (strain ATCC 35092 / DSM 1617 / JCM 11322 / P2) (Sulfolobus solfataricus).